The sequence spans 483 residues: Cobyric acid synthase (483 aa).

One can recognise a GATase cobBQ-type domain in the interval 251–438 (ALIVAVPMLP…LHGVFSADRF (188 aa)). The active-site Nucleophile is C333. H430 is a catalytic residue.

The protein belongs to the CobB/CobQ family. CobQ subfamily.

It functions in the pathway cofactor biosynthesis; adenosylcobalamin biosynthesis. Catalyzes amidations at positions B, D, E, and G on adenosylcobyrinic A,C-diamide. NH(2) groups are provided by glutamine, and one molecule of ATP is hydrogenolyzed for each amidation. In Brucella suis (strain ATCC 23445 / NCTC 10510), this protein is Cobyric acid synthase.